The chain runs to 176 residues: MAAKNLPKVFFDVAVNGKPSGRLTFKLFSDTVPKTAENFRALCTGEKGTGVSGKPLHYKGSHFHRIIPGFMAQGGDFTMGNGRGGESIYGHKFNDENFTLKHTGKGVLSMANAGPNTNGSQFFITFDKTPWLDGNHTVFGQLVEGNQVLEILEQHGTQSGMPTAKVEIVDCGEIKN.

The region spanning 10-173 is the PPIase cyclophilin-type domain; that stretch reads FFDVAVNGKP…AKVEIVDCGE (164 aa).

This sequence belongs to the cyclophilin-type PPIase family.

It catalyses the reaction [protein]-peptidylproline (omega=180) = [protein]-peptidylproline (omega=0). PPIases accelerate the folding of proteins. It catalyzes the cis-trans isomerization of proline imidic peptide bonds in oligopeptides. The protein is Peptidyl-prolyl cis-trans isomerase cyp5 (cyp5) of Rhizopus delemar (strain RA 99-880 / ATCC MYA-4621 / FGSC 9543 / NRRL 43880) (Mucormycosis agent).